Reading from the N-terminus, the 331-residue chain is Terpene synthase 8 (331 aa).

Residues aspartate 97–glutamate 102 carry the DDxx(x)D/E motif motif. Residues asparagine 228 to glutamate 236 carry the NDxxSxxxD/E motif motif.

The protein belongs to the terpene synthase family.

Terpene synthase that converts its substrate farnesyl diphosphate (FPP) into several yet unidentified sesquiterpenes. The sequence is that of Terpene synthase 8 from Dictyostelium purpureum (Slime mold).